Consider the following 562-residue polypeptide: ATP synthase subunit beta, mitochondrial (562 aa).

Low complexity-rich tracts occupy residues 1–13 (MASR…LLRS) and 20–40 (SKSP…SSKS). Disordered stretches follow at residues 1 to 43 (MASR…SRAS) and 58 to 83 (SAAA…KITD). The N-terminal 55 residues, 1 to 55 (MASRRLLSSLLRSSSRRSVSKSPISNINPKLSSSSPSSKSRASPYGYLLTRAAEY), are a transit peptide targeting the mitochondrion. 237–244 (GGAGVGKT) serves as a coordination point for ATP.

Belongs to the ATPase alpha/beta chains family. F-type ATPases have 2 components, CF(1) - the catalytic core - and CF(0) - the membrane proton channel. CF(1) has five subunits: alpha(3), beta(3), gamma(1), delta(1), epsilon(1). CF(0) has three main subunits: a, b and c.

It is found in the mitochondrion. The protein resides in the mitochondrion inner membrane. The catalysed reaction is ATP + H2O + 4 H(+)(in) = ADP + phosphate + 5 H(+)(out). Functionally, mitochondrial membrane ATP synthase (F(1)F(0) ATP synthase or Complex V) produces ATP from ADP in the presence of a proton gradient across the membrane which is generated by electron transport complexes of the respiratory chain. F-type ATPases consist of two structural domains, F(1) - containing the extramembraneous catalytic core, and F(0) - containing the membrane proton channel, linked together by a central stalk and a peripheral stalk. During catalysis, ATP synthesis in the catalytic domain of F(1) is coupled via a rotary mechanism of the central stalk subunits to proton translocation. Subunits alpha and beta form the catalytic core in F(1). Rotation of the central stalk against the surrounding alpha(3)beta(3) subunits leads to hydrolysis of ATP in three separate catalytic sites on the beta subunits. The chain is ATP synthase subunit beta, mitochondrial (ATPB) from Hevea brasiliensis (Para rubber tree).